We begin with the raw amino-acid sequence, 353 residues long: MDEKTSKAASEKAKALAAALSQIEKQFGKGSIMRYGDNEVEHDIQVVSTGSLGLDIALGVGGLPRGRVVEIYGPESSGKTTLTLQVIAEMQKVGGTCAFVDAEHALDVQYASKLGVNLGDLLISQPDTGEQALEITDALVRSGSVDLIVIDSVAALVPKAEIEGEMGDALPGLQARLMSQALRKLTATIKRTNCMVIFINQIRMKIGVMFGNPETTTGGNALKFYSSVRLDIRRIGSIKKGDEVVGNETRVKVVKNKVAPPFKQAEFDIMYGAGISREGEIIDLGVAANVIEKSGAWYSYSGNRIGQGKDNVREYLKENRAMAIEIENKIRDNQGIVARAAEFAPTAEESAED.

73–80 serves as a coordination point for ATP; that stretch reads GPESSGKT.

Belongs to the RecA family.

The protein resides in the cytoplasm. Functionally, can catalyze the hydrolysis of ATP in the presence of single-stranded DNA, the ATP-dependent uptake of single-stranded DNA by duplex DNA, and the ATP-dependent hybridization of homologous single-stranded DNAs. It interacts with LexA causing its activation and leading to its autocatalytic cleavage. In Bordetella avium (strain 197N), this protein is Protein RecA.